Here is a 469-residue protein sequence, read N- to C-terminus: Keratin, type I cytoskeletal 26 (469 aa).

The head stretch occupies residues 1 to 82; it reads MSFRLSSGSR…ENEHGLLPGN (82 aa). The tract at residues 83 to 118 is coil 1A; the sequence is EKVTLQNLNDRLASYLDHVCTLEEANADLEQKIKGW. Residues 83-398 enclose the IF rod domain; it reads EKVTLQNLND…KLIDGEGRKS (316 aa). The segment at 119–140 is linker 1; that stretch reads YEKYGPGSGRQLAYDCSKYFSV. The interval 141–232 is coil 1B; it reads TEDLKRQIIS…KNHQEEMKVM (92 aa). A linker 12 region spans residues 233–255; the sequence is QGAAGGNVNVEINAAPGVDLTVL. The tract at residues 256 to 394 is coil 2; sequence LNNMRAEYED…EMYCKLIDGE (139 aa). A tail region spans residues 395-465; it reads GRKSKSTYCK…NITMEQRLPS (71 aa). Disordered regions lie at residues 398–421 and 450–469; these read SKST…KDSK and KSSK…KVPQ. The span at 405 to 421 shows a compositional bias: basic and acidic residues; it reads SEGRGPKNSENQVKDSK.

Belongs to the intermediate filament family. In terms of assembly, heterotetramer of two type I and two type II keratins.

The polypeptide is Keratin, type I cytoskeletal 26 (Bos taurus (Bovine)).